The following is a 286-amino-acid chain: Polygalacturonan/rhamnogalacturonan transport system permease protein YtcP (286 aa).

Transmembrane regions (helical) follow at residues 9–29 (LIYG…IHVI), 69–89 (LLVS…LSSL), 106–126 (MFLV…FLVV), 131–151 (LLDS…NLII), 176–196 (GIFF…ISLF), and 251–271 (TIKM…YPFI). Residues 69-271 (LLVSVFVTVI…IPVLLVYPFI (203 aa)) form the ABC transmembrane type-1 domain.

This sequence belongs to the binding-protein-dependent transport system permease family. CysTW subfamily. As to quaternary structure, the complex is probably composed of two ATP-binding proteins (MsmX), two transmembrane proteins (YtcP and YteP) and a solute-binding protein (YtcQ).

Its subcellular location is the cell membrane. Involved in pectin degradation. Part of the ABC transporter complex YtcQP-YteP involved in the uptake of polygalacturonan and rhamnogalacturonan type I. Responsible for the translocation of the substrate across the membrane. The protein is Polygalacturonan/rhamnogalacturonan transport system permease protein YtcP (ytcP) of Bacillus subtilis (strain 168).